A 207-amino-acid polypeptide reads, in one-letter code: Ribosomal RNA small subunit methyltransferase G (207 aa).

S-adenosyl-L-methionine contacts are provided by residues Gly-74, Leu-79, Val-125–Glu-126, and Arg-140.

This sequence belongs to the methyltransferase superfamily. RNA methyltransferase RsmG family.

It localises to the cytoplasm. The enzyme catalyses guanosine(527) in 16S rRNA + S-adenosyl-L-methionine = N(7)-methylguanosine(527) in 16S rRNA + S-adenosyl-L-homocysteine. Its function is as follows. Specifically methylates the N7 position of guanine in position 527 of 16S rRNA. This is Ribosomal RNA small subunit methyltransferase G from Shewanella loihica (strain ATCC BAA-1088 / PV-4).